The following is a 715-amino-acid chain: DNA ligase (715 aa).

NAD(+) contacts are provided by residues 47 to 51, 96 to 97, and glutamate 129; these read DADYD and SL. Residue lysine 131 is the N6-AMP-lysine intermediate of the active site. Residues arginine 152, glutamate 189, lysine 306, and lysine 330 each coordinate NAD(+). Cysteine 435, cysteine 438, cysteine 453, and cysteine 459 together coordinate Zn(2+). Residues 637 to 715 form the BRCT domain; it reads KRDSAVAGKT…EDEWLALIQG (79 aa).

This sequence belongs to the NAD-dependent DNA ligase family. LigA subfamily. Requires Mg(2+) as cofactor. It depends on Mn(2+) as a cofactor.

The catalysed reaction is NAD(+) + (deoxyribonucleotide)n-3'-hydroxyl + 5'-phospho-(deoxyribonucleotide)m = (deoxyribonucleotide)n+m + AMP + beta-nicotinamide D-nucleotide.. Functionally, DNA ligase that catalyzes the formation of phosphodiester linkages between 5'-phosphoryl and 3'-hydroxyl groups in double-stranded DNA using NAD as a coenzyme and as the energy source for the reaction. It is essential for DNA replication and repair of damaged DNA. The chain is DNA ligase from Rhodopseudomonas palustris (strain BisA53).